A 298-amino-acid chain; its full sequence is Dioxygenase aneA (298 aa).

The Fe cation site is built by His-134, Asp-136, and His-213.

Belongs to the PhyH family. As to quaternary structure, homodimer. Fe cation is required as a cofactor.

It catalyses the reaction aculene D + 2-oxoglutarate + O2 = aculene C + succinate + CO2 + H2O. It carries out the reaction aculene B + 2-oxoglutarate + O2 = aculene A + succinate + CO2 + H2O. It functions in the pathway secondary metabolite biosynthesis. Its function is as follows. Dioxygenase; part of the gene cluster that mediates the biosynthesis of aculenes, a unique type of norsesquiterpenes that contain a nordaucane skeleton linked to an L-proline moiety and are of mixed biosynthetic origin. The pathway begins with the synthesis of dauca-4,7-diene by the terpene cyclase aneC using farnesyl pyrophosphate (FPP) as substrate. The cytochrome P450 monooxygenase aneF then performs the initial oxidation at C-12 of dauca-4,7-diene to yield asperaculane D. Asperaculane D is substrate of the cytochrome P450 monooxygenase aneD for C-10 hydroxylation to yield asperaculane E. The cytochrome P450 monooxygenase aneG then converts asperaculane E into aculene D via C-2 oxidation. The monomodular nonribosomal peptide synthase aneB adenylates L-proline and the thiohydrolase aneE transfers this activated L-proline derivative to aculenes D and C to produce respectively aculenes B and A. The dioxygenase aneA converts aculene D into aculene C, and aculene B into aculene A by introducing the 5,6-alkene moiety. Asperculanes A, B, C and F, as well as 14-prolyl asperculane C, might be shunt products of the pathway. This chain is Dioxygenase aneA, found in Aspergillus aculeatus (strain ATCC 16872 / CBS 172.66 / WB 5094).